A 182-amino-acid polypeptide reads, in one-letter code: Inosine/xanthosine triphosphatase (182 aa).

This sequence belongs to the YjjX NTPase family. In terms of assembly, homodimer. It depends on Mg(2+) as a cofactor. Mn(2+) serves as cofactor.

It carries out the reaction XTP + H2O = XDP + phosphate + H(+). The catalysed reaction is ITP + H2O = IDP + phosphate + H(+). Its function is as follows. Phosphatase that hydrolyzes non-canonical purine nucleotides such as XTP and ITP to their respective diphosphate derivatives. Probably excludes non-canonical purines from DNA/RNA precursor pool, thus preventing their incorporation into DNA/RNA and avoiding chromosomal lesions. This Vibrio parahaemolyticus serotype O3:K6 (strain RIMD 2210633) protein is Inosine/xanthosine triphosphatase.